A 120-amino-acid polypeptide reads, in one-letter code: Large ribosomal subunit protein uL18 (120 aa).

Belongs to the universal ribosomal protein uL18 family. In terms of assembly, part of the 50S ribosomal subunit; part of the 5S rRNA/L5/L18/L25 subcomplex. Contacts the 5S and 23S rRNAs.

This is one of the proteins that bind and probably mediate the attachment of the 5S RNA into the large ribosomal subunit, where it forms part of the central protuberance. The protein is Large ribosomal subunit protein uL18 of Bordetella bronchiseptica (strain ATCC BAA-588 / NCTC 13252 / RB50) (Alcaligenes bronchisepticus).